A 525-amino-acid chain; its full sequence is GMP synthase [glutamine-hydrolyzing] (525 aa).

The Glutamine amidotransferase type-1 domain maps to 9 to 207 (RILILDFGSQ…VLDICACEAL (199 aa)). Cys-86 functions as the Nucleophile in the catalytic mechanism. Catalysis depends on residues His-181 and Glu-183. One can recognise a GMPS ATP-PPase domain in the interval 208–400 (WTPATIIEDA…LGLPYDMLYR (193 aa)). 235-241 (SGGVDSS) is a binding site for ATP.

As to quaternary structure, homodimer.

The catalysed reaction is XMP + L-glutamine + ATP + H2O = GMP + L-glutamate + AMP + diphosphate + 2 H(+). It participates in purine metabolism; GMP biosynthesis; GMP from XMP (L-Gln route): step 1/1. Catalyzes the synthesis of GMP from XMP. In Yersinia enterocolitica serotype O:8 / biotype 1B (strain NCTC 13174 / 8081), this protein is GMP synthase [glutamine-hydrolyzing].